Consider the following 322-residue polypeptide: Replication factor C small subunit (322 aa).

45-52 contributes to the ATP binding site; that stretch reads GPPGVGKT.

The protein belongs to the activator 1 small subunits family. RfcS subfamily. In terms of assembly, heteromultimer composed of small subunits (RfcS) and large subunits (RfcL).

Its function is as follows. Part of the RFC clamp loader complex which loads the PCNA sliding clamp onto DNA. The chain is Replication factor C small subunit from Methanocella arvoryzae (strain DSM 22066 / NBRC 105507 / MRE50).